Consider the following 142-residue polypeptide: Large ribosomal subunit protein uL11 (142 aa).

This sequence belongs to the universal ribosomal protein uL11 family. As to quaternary structure, part of the ribosomal stalk of the 50S ribosomal subunit. Interacts with L10 and the large rRNA to form the base of the stalk. L10 forms an elongated spine to which L12 dimers bind in a sequential fashion forming a multimeric L10(L12)X complex. Post-translationally, one or more lysine residues are methylated.

Functionally, forms part of the ribosomal stalk which helps the ribosome interact with GTP-bound translation factors. The polypeptide is Large ribosomal subunit protein uL11 (Ruthia magnifica subsp. Calyptogena magnifica).